The primary structure comprises 69 residues: Conotoxin AbVIE (69 aa).

Positions 1–17 (VLIIAVLFLTACQLTTA) are cleaved as a signal peptide. Residues 18-40 (ETSSRGKQKHRALRSTDKYSRMT) constitute a propeptide that is removed on maturation. Cystine bridges form between C43–C57, C50–C61, and C56–C66.

It belongs to the conotoxin O1 superfamily. Expressed by the venom duct.

Its subcellular location is the secreted. The chain is Conotoxin AbVIE from Conus abbreviatus (Abbreviated cone).